A 156-amino-acid polypeptide reads, in one-letter code: Extracellular giant hemoglobin major globin subunit A1 (156 aa).

The first 16 residues, 1-16 (MKVLIIFACLVVMASA), serve as a signal peptide directing secretion. The Globin domain maps to 17-156 (VCNRLEQILV…YERIASGISG (140 aa)). The cysteines at positions 18 and 146 are disulfide-linked. Position 79 (C79) interacts with hydrogen sulfide. H110 provides a ligand contact to heme b.

This sequence belongs to the globin family. As to quaternary structure, the 400 kDa hemoglobin consists of a spherical 24-mer arranged as a double layer of dome-shaped dodecamers. Each dodecamer is composed of the 3-fold trimer of the tetramer A1-A2-B1-B2 having one intra-tetramer (A1-B2) disulfide bond and one inter-tetramer (B1-B2) disulfide bond per tetramer.

It is found in the secreted. The extracellular giant hemoglobin is able to bind and transport oxygen and hydrosulfide simultaneously and reversibly at two different sites. The protein is Extracellular giant hemoglobin major globin subunit A1 (ghbA1) of Oligobrachia mashikoi (Beard worm).